The primary structure comprises 965 residues: Phosphoenolpyruvate carboxylase (965 aa).

Ser11 carries the phosphoserine modification. Residues His173 and Lys601 contribute to the active site.

The protein belongs to the PEPCase type 1 family. In terms of assembly, homotetramer. Mg(2+) serves as cofactor.

The protein localises to the cytoplasm. The enzyme catalyses oxaloacetate + phosphate = phosphoenolpyruvate + hydrogencarbonate. Its pathway is photosynthesis; C3 acid pathway. With respect to regulation, by light-reversible phosphorylation. Its function is as follows. Through the carboxylation of phosphoenolpyruvate (PEP) it forms oxaloacetate, a four-carbon dicarboxylic acid source for the tricarboxylic acid cycle. This chain is Phosphoenolpyruvate carboxylase (PPC1), found in Solanum tuberosum (Potato).